The sequence spans 276 residues: Diaminopimelate epimerase (276 aa).

Residues Asn11, Gln44, and Asn64 each contribute to the substrate site. Cys73 serves as the catalytic Proton donor. Residues 74–75 (GN), Asn157, Asn190, and 208–209 (ER) contribute to the substrate site. Cys217 acts as the Proton acceptor in catalysis. 218-219 (GS) serves as a coordination point for substrate.

This sequence belongs to the diaminopimelate epimerase family. As to quaternary structure, homodimer.

The protein resides in the cytoplasm. It catalyses the reaction (2S,6S)-2,6-diaminopimelate = meso-2,6-diaminopimelate. Its pathway is amino-acid biosynthesis; L-lysine biosynthesis via DAP pathway; DL-2,6-diaminopimelate from LL-2,6-diaminopimelate: step 1/1. Its function is as follows. Catalyzes the stereoinversion of LL-2,6-diaminopimelate (L,L-DAP) to meso-diaminopimelate (meso-DAP), a precursor of L-lysine and an essential component of the bacterial peptidoglycan. The chain is Diaminopimelate epimerase from Blochmanniella floridana.